The sequence spans 153 residues: Transcription antitermination protein NusB (153 aa).

This sequence belongs to the NusB family.

Involved in transcription antitermination. Required for transcription of ribosomal RNA (rRNA) genes. Binds specifically to the boxA antiterminator sequence of the ribosomal RNA (rrn) operons. The polypeptide is Transcription antitermination protein NusB (Clostridium tetani (strain Massachusetts / E88)).